Reading from the N-terminus, the 430-residue chain is NADH-quinone oxidoreductase subunit D 1 (430 aa).

The disordered stretch occupies residues 1 to 36 (MSEAKGVGGIDPRATPGSAGAGERPPMGTVSRAGDG).

It belongs to the complex I 49 kDa subunit family. In terms of assembly, NDH-1 is composed of 14 different subunits. Subunits NuoB, C, D, E, F, and G constitute the peripheral sector of the complex.

The protein resides in the cell inner membrane. The catalysed reaction is a quinone + NADH + 5 H(+)(in) = a quinol + NAD(+) + 4 H(+)(out). Functionally, NDH-1 shuttles electrons from NADH, via FMN and iron-sulfur (Fe-S) centers, to quinones in the respiratory chain. The immediate electron acceptor for the enzyme in this species is believed to be ubiquinone. Couples the redox reaction to proton translocation (for every two electrons transferred, four hydrogen ions are translocated across the cytoplasmic membrane), and thus conserves the redox energy in a proton gradient. The sequence is that of NADH-quinone oxidoreductase subunit D 1 from Anaeromyxobacter dehalogenans (strain 2CP-C).